Reading from the N-terminus, the 528-residue chain is Importin subunit alpha-7 (528 aa).

The IBB domain occupies 1–56 (MKGGETMSVRRSGYKAVVDGVGGRRRREDDMVEIRKAKREESLLKKRREALPHSPS). ARM repeat units lie at residues 93–133 (NVRV…NIAS), 136–175 (SENT…NISG), 178–218 (PRCR…NLCR), 220–259 (KPQP…YLSD), 262–301 (NEKI…NIVT), 304–344 (DSQT…NITA), 347–386 (QSQI…NAIA), and 390–429 (YKQI…KILK).

Belongs to the importin alpha family. As to quaternary structure, forms a complex with importin subunit beta-1.

It localises to the nucleus envelope. Functionally, binds to conventional NLS motifs and mediates nuclear protein import across the nuclear envelope. Acts as a cellular receptor for the nuclear import of the virD2 protein of Agrobacterium, but is not essential for Agrobacterium-mediated root transformation. The sequence is that of Importin subunit alpha-7 from Arabidopsis thaliana (Mouse-ear cress).